A 327-amino-acid chain; its full sequence is GTPase Obg (327 aa).

Residues 1–159 (MQFIDQANII…WEVQLELKLL (159 aa)) enclose the Obg domain. The region spanning 160-327 (AEVGIIGLPN…PLLSEVWKRI (168 aa)) is the OBG-type G domain. ATP is bound by residues 166–173 (GLPNAGKS), 191–195 (FTTLI), 213–216 (DIPG), 280–283 (NKME), and 309–311 (SSS). Mg(2+) contacts are provided by Ser173 and Thr193.

This sequence belongs to the TRAFAC class OBG-HflX-like GTPase superfamily. OBG GTPase family. In terms of assembly, monomer. It depends on Mg(2+) as a cofactor.

Its subcellular location is the cytoplasm. In terms of biological role, an essential GTPase which binds GTP, GDP and possibly (p)ppGpp with moderate affinity, with high nucleotide exchange rates and a fairly low GTP hydrolysis rate. Plays a role in control of the cell cycle, stress response, ribosome biogenesis and in those bacteria that undergo differentiation, in morphogenesis control. The chain is GTPase Obg from Prochlorococcus marinus subsp. pastoris (strain CCMP1986 / NIES-2087 / MED4).